A 302-amino-acid polypeptide reads, in one-letter code: Quinolinate synthase (302 aa).

The iminosuccinate site is built by H24 and S41. C86 is a [4Fe-4S] cluster binding site. Iminosuccinate contacts are provided by residues 112-114 (YVN) and S129. C171 contacts [4Fe-4S] cluster. Iminosuccinate is bound by residues 197–199 (HPE) and T214. Residue C259 coordinates [4Fe-4S] cluster.

Belongs to the quinolinate synthase family. Type 2 subfamily. It depends on [4Fe-4S] cluster as a cofactor.

The protein localises to the cytoplasm. It carries out the reaction iminosuccinate + dihydroxyacetone phosphate = quinolinate + phosphate + 2 H2O + H(+). It participates in cofactor biosynthesis; NAD(+) biosynthesis; quinolinate from iminoaspartate: step 1/1. Its function is as follows. Catalyzes the condensation of iminoaspartate with dihydroxyacetone phosphate to form quinolinate. The polypeptide is Quinolinate synthase (Dehalococcoides mccartyi (strain CBDB1)).